A 701-amino-acid chain; its full sequence is UvrABC system protein B (701 aa).

In terms of domain architecture, Helicase ATP-binding spans 35–422; sequence RRIQGGAADT…GGDVVEQVIR (388 aa). ATP is bound at residue 48–55; that stretch reads GATGTGKT. A Beta-hairpin motif is present at residues 101-124; it reads YYDYYQPEAYVPQTDTYIEKDSSI. In terms of domain architecture, Helicase C-terminal spans 439–605; it reads QIDDLVHEIR…PLRKKIADIL (167 aa). The disordered stretch occupies residues 620 to 648; it reads ARSRGEKRGTPTPRSGALSGPDRVAEQAK. Residues 656-691 enclose the UVR domain; that stretch reads AALVEQLTEQMHQAAADLQFELAARLRDEIKELKRE.

It belongs to the UvrB family. As to quaternary structure, forms a heterotetramer with UvrA during the search for lesions. Interacts with UvrC in an incision complex.

Its subcellular location is the cytoplasm. Functionally, the UvrABC repair system catalyzes the recognition and processing of DNA lesions. A damage recognition complex composed of 2 UvrA and 2 UvrB subunits scans DNA for abnormalities. Upon binding of the UvrA(2)B(2) complex to a putative damaged site, the DNA wraps around one UvrB monomer. DNA wrap is dependent on ATP binding by UvrB and probably causes local melting of the DNA helix, facilitating insertion of UvrB beta-hairpin between the DNA strands. Then UvrB probes one DNA strand for the presence of a lesion. If a lesion is found the UvrA subunits dissociate and the UvrB-DNA preincision complex is formed. This complex is subsequently bound by UvrC and the second UvrB is released. If no lesion is found, the DNA wraps around the other UvrB subunit that will check the other stand for damage. The chain is UvrABC system protein B from Thermobifida fusca (strain YX).